The chain runs to 300 residues: GTPase Era (300 aa).

The Era-type G domain occupies 5 to 176 (HSGFVCLVGR…IDVLAAALPA (172 aa)). A G1 region spans residues 13-20 (GRPNTGKS). 13 to 20 (GRPNTGKS) contributes to the GTP binding site. Residues 39–43 (QTTRH) form a G2 region. The tract at residues 60–63 (DTPG) is G3. GTP is bound by residues 60–64 (DTPGL) and 125–128 (TKID). The interval 125–128 (TKID) is G4. A G5 region spans residues 155-157 (VSA). One can recognise a KH type-2 domain in the interval 207–286 (VRDELPHSLA…YLDLRVKVAK (80 aa)).

The protein belongs to the TRAFAC class TrmE-Era-EngA-EngB-Septin-like GTPase superfamily. Era GTPase family. As to quaternary structure, monomer.

It localises to the cell envelope. It is found in the secreted. The protein resides in the cell wall. Its function is as follows. Exhibits GTPase activity. Binds RNA but is probably not involved in ribosome assembly in mycobacteria. In Mycobacterium bovis (strain ATCC BAA-935 / AF2122/97), this protein is GTPase Era.